We begin with the raw amino-acid sequence, 1031 residues long: Serine-repeat antigen protein 6 (1031 aa).

Residues 1-24 form the signal peptide; that stretch reads MICPIFFLYIINVLFTQYFIKCEG. Residue Asn74 is glycosylated (N-linked (GlcNAc...) asparagine). Positions 91–101 are enriched in low complexity; sequence KVVSSSESGKG. Positions 91-163 are disordered; that stretch reads KVVSSSESGK…TESSSETLNK (73 aa). Residues 104–139 are compositionally biased toward polar residues; it reads VSHTKVTSEGLSDTQPNVTQSVSSSTHTPGSLDSTM. A glycan (N-linked (GlcNAc...) asparagine) is linked at Asn120. Over residues 140–158 the composition is skewed to low complexity; the sequence is STEQHSSVSQSSLPTESSS. N-linked (GlcNAc...) asparagine glycosylation occurs at Asn449. The interval 490 to 567 is disordered; that stretch reads TLPSESPSES…GDTNYVYDFD (78 aa). The segment covering 492–505 has biased composition (low complexity); it reads PSESPSESSSKSDS. The segment covering 511–535 has biased composition (basic and acidic residues); sequence NDKDKNEDKDDMSKNSKEEFKNDDK. Asn544 carries an N-linked (GlcNAc...) asparagine glycan. A compositionally biased stretch (low complexity) spans 554–564; the sequence is NINNGDTNYVY. A glycan (N-linked (GlcNAc...) asparagine) is linked at Asn573. Residue Cys644 is part of the active site. A glycan (N-linked (GlcNAc...) asparagine) is linked at Asn674. Residues His810 and Asn835 contribute to the active site. N-linked (GlcNAc...) asparagine glycosylation is found at Asn929 and Asn974.

Belongs to the peptidase C1 family. Post-translationally, just prior to merozoite egress from host erythrocytes, proteolytically cleaved by SUB1 to generate the active 75kDa form.

It is found in the parasitophorous vacuole lumen. The protein localises to the parasitophorous vacuole membrane. In terms of biological role, cysteine protease which plays an essential role in merozoite egress from host erythrocytes. May cleave host SPTB/beta spectrin and ANK1/ankyrin-1 which disrupts host erythrocyte actin cytoskeleton and leads to host erythrocyte cell membrane rupture. This chain is Serine-repeat antigen protein 6, found in Plasmodium falciparum (isolate 3D7).